The chain runs to 344 residues: Anthranilate phosphoribosyltransferase (344 aa).

5-phospho-alpha-D-ribose 1-diphosphate contacts are provided by residues Gly80, Gly83–Asp84, Thr88, Asn90–Thr93, Lys108–Ser116, and Ser120. Position 80 (Gly80) interacts with anthranilate. Position 92 (Ser92) interacts with Mg(2+). Asn111 contacts anthranilate. Residue Arg166 coordinates anthranilate. 2 residues coordinate Mg(2+): Asp225 and Glu226.

Belongs to the anthranilate phosphoribosyltransferase family. As to quaternary structure, homodimer. Mg(2+) serves as cofactor.

The enzyme catalyses N-(5-phospho-beta-D-ribosyl)anthranilate + diphosphate = 5-phospho-alpha-D-ribose 1-diphosphate + anthranilate. The protein operates within amino-acid biosynthesis; L-tryptophan biosynthesis; L-tryptophan from chorismate: step 2/5. Its function is as follows. Catalyzes the transfer of the phosphoribosyl group of 5-phosphorylribose-1-pyrophosphate (PRPP) to anthranilate to yield N-(5'-phosphoribosyl)-anthranilate (PRA). The sequence is that of Anthranilate phosphoribosyltransferase from Petrotoga mobilis (strain DSM 10674 / SJ95).